The following is a 208-amino-acid chain: Small ribosomal subunit protein uS4 (208 aa).

Residues 95 to 157 (RRIDNVVYRA…DSLKKLIRSN (63 aa)) form the S4 RNA-binding domain.

Belongs to the universal ribosomal protein uS4 family. Part of the 30S ribosomal subunit. Contacts protein S5. The interaction surface between S4 and S5 is involved in control of translational fidelity.

Functionally, one of the primary rRNA binding proteins, it binds directly to 16S rRNA where it nucleates assembly of the body of the 30S subunit. Its function is as follows. With S5 and S12 plays an important role in translational accuracy. In Borreliella burgdorferi (strain ATCC 35210 / DSM 4680 / CIP 102532 / B31) (Borrelia burgdorferi), this protein is Small ribosomal subunit protein uS4.